We begin with the raw amino-acid sequence, 73 residues long: Conotoxin Vc6.17 (73 aa).

The signal sequence occupies residues 1 to 19 (MQKLIILLLVAAVLMSTQA). Positions 20 to 44 (LFQEKRRKEKIDLLSKRKTDAEKQH) are excised as a propeptide. Cystine bridges form between Cys48–Cys62, Cys55–Cys66, and Cys61–Cys71.

This sequence belongs to the conotoxin O2 superfamily. As to expression, expressed by the venom duct.

The protein resides in the secreted. Inhibits voltage-gated ion channels. This is Conotoxin Vc6.17 from Conus victoriae (Queen Victoria cone).